Consider the following 231-residue polypeptide: Phosphatidylserine decarboxylase proenzyme (231 aa).

Serine 188 functions as the Schiff-base intermediate with substrate; via pyruvic acid in the catalytic mechanism. Residue serine 188 is modified to Pyruvic acid (Ser); by autocatalysis.

It belongs to the phosphatidylserine decarboxylase family. PSD-A subfamily. Heterodimer of a large membrane-associated beta subunit and a small pyruvoyl-containing alpha subunit. Pyruvate is required as a cofactor. In terms of processing, is synthesized initially as an inactive proenzyme. Formation of the active enzyme involves a self-maturation process in which the active site pyruvoyl group is generated from an internal serine residue via an autocatalytic post-translational modification. Two non-identical subunits are generated from the proenzyme in this reaction, and the pyruvate is formed at the N-terminus of the alpha chain, which is derived from the carboxyl end of the proenzyme. The post-translation cleavage follows an unusual pathway, termed non-hydrolytic serinolysis, in which the side chain hydroxyl group of the serine supplies its oxygen atom to form the C-terminus of the beta chain, while the remainder of the serine residue undergoes an oxidative deamination to produce ammonia and the pyruvoyl prosthetic group on the alpha chain.

It is found in the cell membrane. It catalyses the reaction a 1,2-diacyl-sn-glycero-3-phospho-L-serine + H(+) = a 1,2-diacyl-sn-glycero-3-phosphoethanolamine + CO2. It functions in the pathway phospholipid metabolism; phosphatidylethanolamine biosynthesis; phosphatidylethanolamine from CDP-diacylglycerol: step 2/2. Catalyzes the formation of phosphatidylethanolamine (PtdEtn) from phosphatidylserine (PtdSer). This is Phosphatidylserine decarboxylase proenzyme from Rickettsia rickettsii (strain Iowa).